Consider the following 382-residue polypeptide: Anhydro-N-acetylmuramic acid kinase (382 aa).

Residue 9 to 16 coordinates ATP; that stretch reads GTSLDGID.

Belongs to the anhydro-N-acetylmuramic acid kinase family.

The enzyme catalyses 1,6-anhydro-N-acetyl-beta-muramate + ATP + H2O = N-acetyl-D-muramate 6-phosphate + ADP + H(+). It functions in the pathway amino-sugar metabolism; 1,6-anhydro-N-acetylmuramate degradation. The protein operates within cell wall biogenesis; peptidoglycan recycling. Functionally, catalyzes the specific phosphorylation of 1,6-anhydro-N-acetylmuramic acid (anhMurNAc) with the simultaneous cleavage of the 1,6-anhydro ring, generating MurNAc-6-P. Is required for the utilization of anhMurNAc either imported from the medium or derived from its own cell wall murein, and thus plays a role in cell wall recycling. This chain is Anhydro-N-acetylmuramic acid kinase, found in Bacillus cereus (strain 03BB102).